Here is a 232-residue protein sequence, read N- to C-terminus: uncharacterized protein (232 aa).

The next 7 helical transmembrane spans lie at 17–37 (FLAKVFGLMSIGLLISAVFAY), 54–74 (MSFMAMILIQFGLVYAISGAL), 84–104 (ALFLLYSALTGVTLSSIFMIY), 107–127 (GSIVFTFGITAGTFLGMSVYG), 138–158 (GSYLIMGLWGIIIASLVNMFF), 161–181 (SGLNFLISILGVVIFTGLTAY), and 203–223 (MAVVASLKLYLDFINLFLYLL).

This sequence belongs to the BI1 family.

The protein resides in the cell membrane. This is an uncharacterized protein from Borreliella burgdorferi (strain ATCC 35210 / DSM 4680 / CIP 102532 / B31) (Borrelia burgdorferi).